Consider the following 401-residue polypeptide: Homoserine O-acetyltransferase (401 aa).

The AB hydrolase-1 domain occupies 37–358; that stretch reads NAVLVCHALT…HGHDAFLVEP (322 aa). The Nucleophile role is filled by serine 146. Arginine 215 is a substrate binding site. Residues aspartate 318 and histidine 351 contribute to the active site. Aspartate 352 contacts substrate.

This sequence belongs to the AB hydrolase superfamily. MetX family. In terms of assembly, homodimer.

Its subcellular location is the cytoplasm. The enzyme catalyses L-homoserine + acetyl-CoA = O-acetyl-L-homoserine + CoA. Its pathway is amino-acid biosynthesis; L-methionine biosynthesis via de novo pathway; O-acetyl-L-homoserine from L-homoserine: step 1/1. Functionally, transfers an acetyl group from acetyl-CoA to L-homoserine, forming acetyl-L-homoserine. The sequence is that of Homoserine O-acetyltransferase from Natronomonas pharaonis (strain ATCC 35678 / DSM 2160 / CIP 103997 / JCM 8858 / NBRC 14720 / NCIMB 2260 / Gabara) (Halobacterium pharaonis).